A 338-amino-acid polypeptide reads, in one-letter code: Mitoferrin-1 (338 aa).

The disordered stretch occupies residues 1–37 (MELRRGGVGNQAAGRRMDGDCRDGGCGSKDAGSEDYE). 3 Solcar repeats span residues 43 to 131 (ASVS…MKRT), 141 to 225 (NSHL…LQEQ), and 232 to 326 (YNPQ…FKYI). Helical transmembrane passes span 45 to 64 (VSTH…SIMY), 106 to 125 (GLNV…FACY), 143 to 162 (HLAN…AVMN), 200 to 219 (SYTT…FITY), 234 to 253 (PQSH…AATT), and 301 to 320 (GIQA…WSVY).

It belongs to the mitochondrial carrier (TC 2.A.29) family. Interacts with ACB10; this interaction stabilizes SLC25A37 and enhances the function of SLC25A37 to import mitochondrial iron during erythroid differentiation. Highly expressed in hematopoietic organs, fetal liver, bone marrow and spleen.

It is found in the mitochondrion inner membrane. It carries out the reaction Fe(2+)(in) = Fe(2+)(out). Its function is as follows. Mitochondrial iron transporter that specifically mediates iron uptake in developing erythroid cells, thereby playing an essential role in heme biosynthesis. The protein is Mitoferrin-1 (Slc25a37) of Mus musculus (Mouse).